A 406-amino-acid polypeptide reads, in one-letter code: Succinylornithine transaminase (406 aa).

Lysine 252 carries the N6-(pyridoxal phosphate)lysine modification.

Belongs to the class-III pyridoxal-phosphate-dependent aminotransferase family. AstC subfamily. Requires pyridoxal 5'-phosphate as cofactor.

The enzyme catalyses N(2)-succinyl-L-ornithine + 2-oxoglutarate = N-succinyl-L-glutamate 5-semialdehyde + L-glutamate. It participates in amino-acid degradation; L-arginine degradation via AST pathway; L-glutamate and succinate from L-arginine: step 3/5. Functionally, catalyzes the transamination of N(2)-succinylornithine and alpha-ketoglutarate into N(2)-succinylglutamate semialdehyde and glutamate. Can also act as an acetylornithine aminotransferase. In Shigella boydii serotype 18 (strain CDC 3083-94 / BS512), this protein is Succinylornithine transaminase.